The following is a 68-amino-acid chain: Large ribosomal subunit protein bL35 (68 aa).

This sequence belongs to the bacterial ribosomal protein bL35 family.

The protein is Large ribosomal subunit protein bL35 of Persephonella marina (strain DSM 14350 / EX-H1).